The chain runs to 102 residues: Acid shock protein (102 aa).

A signal peptide spans 1–21 (MKKVLALVVAAAMGLSSAAFA). A compositionally biased stretch (low complexity) spans 22-41 (AETATTPAPTATTTKAAPAK). The propeptide occupies 22–58 (AETATTPAPTATTTKAAPAKTTHHKKQHKAAPAQKAQ). Positions 22–102 (AETATTPAPT…PAKPAAQPAA (81 aa)) are disordered. Basic residues predominate over residues 80 to 90 (AAKKHARKHSH). Low complexity predominate over residues 91–102 (QQPAKPAAQPAA).

This sequence belongs to the Asr family. Proteolytic processing gives rise to the active protein.

It is found in the periplasm. In terms of biological role, required for growth and/or survival at acidic conditions. This chain is Acid shock protein, found in Escherichia coli O127:H6 (strain E2348/69 / EPEC).